The primary structure comprises 64 residues: Prokaryotic ubiquitin-like protein Pup (64 aa).

Basic and acidic residues-rich tracts occupy residues 1-11 and 25-34; these read MAQEQTKRTGG and GQERREKLAE. Positions 1 to 38 are disordered; the sequence is MAQEQTKRTGGGDEDEGSAGPEAAGQERREKLAEDTDD. The tract at residues 21–58 is ARC ATPase binding; the sequence is PEAAGQERREKLAEDTDDLLDEIDDVLEENAEDFVRAY. A coiled-coil region spans residues 24 to 52; sequence AGQERREKLAEDTDDLLDEIDDVLEENAE. Gln-64 is modified (deamidated glutamine). Gln-64 participates in a covalent cross-link: Isoglutamyl lysine isopeptide (Gln-Lys) (interchain with K-? in acceptor proteins).

The protein belongs to the prokaryotic ubiquitin-like protein family. Strongly interacts with the proteasome-associated ATPase ARC through a hydrophobic interface; the interacting region of Pup lies in its C-terminal half. There is one Pup binding site per ARC hexamer ring. Post-translationally, is modified by deamidation of its C-terminal glutamine to glutamate by the deamidase Dop, a prerequisite to the subsequent pupylation process.

It participates in protein degradation; proteasomal Pup-dependent pathway. Its function is as follows. Protein modifier that is covalently attached to lysine residues of substrate proteins, thereby targeting them for proteasomal degradation. The tagging system is termed pupylation. The protein is Prokaryotic ubiquitin-like protein Pup of Nocardia farcinica (strain IFM 10152).